The sequence spans 159 residues: Nucleotide-binding protein PSPTO_4393 (159 aa).

This sequence belongs to the YajQ family.

Nucleotide-binding protein. This chain is Nucleotide-binding protein PSPTO_4393, found in Pseudomonas syringae pv. tomato (strain ATCC BAA-871 / DC3000).